The sequence spans 398 residues: Acetylornithine aminotransferase (398 aa).

F129 lines the pyridoxal 5'-phosphate pocket. Residue R132 coordinates N(2)-acetyl-L-ornithine. Residue 214–217 coordinates pyridoxal 5'-phosphate; it reads DEVQ. An N6-(pyridoxal phosphate)lysine modification is found at K243. Residue S271 coordinates N(2)-acetyl-L-ornithine. A pyridoxal 5'-phosphate-binding site is contributed by T272.

The protein belongs to the class-III pyridoxal-phosphate-dependent aminotransferase family. ArgD subfamily. In terms of assembly, homodimer. It depends on pyridoxal 5'-phosphate as a cofactor.

The protein resides in the cytoplasm. The enzyme catalyses N(2)-acetyl-L-ornithine + 2-oxoglutarate = N-acetyl-L-glutamate 5-semialdehyde + L-glutamate. The protein operates within amino-acid biosynthesis; L-arginine biosynthesis; N(2)-acetyl-L-ornithine from L-glutamate: step 4/4. This chain is Acetylornithine aminotransferase, found in Neisseria meningitidis serogroup B (strain ATCC BAA-335 / MC58).